Consider the following 255-residue polypeptide: tRNA (guanine-N(1)-)-methyltransferase (255 aa).

S-adenosyl-L-methionine-binding positions include G119 and 139 to 144 (IGDFIL).

It belongs to the RNA methyltransferase TrmD family. Homodimer.

Its subcellular location is the cytoplasm. The enzyme catalyses guanosine(37) in tRNA + S-adenosyl-L-methionine = N(1)-methylguanosine(37) in tRNA + S-adenosyl-L-homocysteine + H(+). Functionally, specifically methylates guanosine-37 in various tRNAs. The sequence is that of tRNA (guanine-N(1)-)-methyltransferase from Pseudoalteromonas translucida (strain TAC 125).